The primary structure comprises 335 residues: Serpentine receptor class XA 10 (335 aa).

At methionine 1–arginine 10 the chain is on the extracellular side. A helical membrane pass occupies residues isoleucine 11–serine 31. The Cytoplasmic portion of the chain corresponds to leucine 32–tyrosine 46. The helical transmembrane segment at isoleucine 47–leucine 67 threads the bilayer. Over proline 68–serine 82 the chain is Extracellular. The chain crosses the membrane as a helical span at residues isoleucine 83 to isoleucine 103. Over leucine 104–lysine 126 the chain is Cytoplasmic. Residues isoleucine 127–leucine 147 traverse the membrane as a helical segment. The Extracellular segment spans residues serine 148–asparagine 177. A helical membrane pass occupies residues tyrosine 178–phenylalanine 198. Residues lysine 199–methionine 238 lie on the Cytoplasmic side of the membrane. A helical transmembrane segment spans residues leucine 239 to valine 259. Topologically, residues leucine 260–leucine 276 are extracellular. A helical transmembrane segment spans residues alanine 277–phenylalanine 297. Topologically, residues threonine 298 to alanine 319 are cytoplasmic.

It belongs to the nematode receptor-like protein srxa family.

The protein localises to the membrane. The polypeptide is Serpentine receptor class XA 10 (srxa-10) (Caenorhabditis elegans).